Reading from the N-terminus, the 88-residue chain is UPF0367 protein AM1_1885 (88 aa).

This sequence belongs to the UPF0367 family.

In Acaryochloris marina (strain MBIC 11017), this protein is UPF0367 protein AM1_1885.